We begin with the raw amino-acid sequence, 116 residues long: MVRIKRGNVARKRRQKILKAAKGFYACTTFRAANERVMKSWKASYRGRKLRKRDFRRLWITRLNAILPYKYSKFVHQLKQNQIALNRKMLYQLSCLDQKGFEQLYGLSLTRNHLIC.

The protein belongs to the bacterial ribosomal protein bL20 family.

The protein resides in the plastid. The protein localises to the chloroplast. Functionally, binds directly to 23S ribosomal RNA and is necessary for the in vitro assembly process of the 50S ribosomal subunit. It is not involved in the protein synthesizing functions of that subunit. This chain is Large ribosomal subunit protein bL20c, found in Cyanidioschyzon merolae (strain NIES-3377 / 10D) (Unicellular red alga).